We begin with the raw amino-acid sequence, 605 residues long: DNA mismatch repair protein MutL (605 aa).

This sequence belongs to the DNA mismatch repair MutL/HexB family.

In terms of biological role, this protein is involved in the repair of mismatches in DNA. It is required for dam-dependent methyl-directed DNA mismatch repair. May act as a 'molecular matchmaker', a protein that promotes the formation of a stable complex between two or more DNA-binding proteins in an ATP-dependent manner without itself being part of a final effector complex. In Exiguobacterium sp. (strain ATCC BAA-1283 / AT1b), this protein is DNA mismatch repair protein MutL.